The chain runs to 293 residues: Elongation factor Ts (293 aa).

The segment at 79–82 (TDFV) is involved in Mg(2+) ion dislocation from EF-Tu.

It belongs to the EF-Ts family.

The protein resides in the cytoplasm. In terms of biological role, associates with the EF-Tu.GDP complex and induces the exchange of GDP to GTP. It remains bound to the aminoacyl-tRNA.EF-Tu.GTP complex up to the GTP hydrolysis stage on the ribosome. In Halalkalibacterium halodurans (strain ATCC BAA-125 / DSM 18197 / FERM 7344 / JCM 9153 / C-125) (Bacillus halodurans), this protein is Elongation factor Ts (tsf).